A 98-amino-acid polypeptide reads, in one-letter code: Integration host factor subunit alpha (98 aa).

Positions 49 to 71 (FGNFDLRDKNQRPGRNPKTGEDI) are disordered.

It belongs to the bacterial histone-like protein family. As to quaternary structure, heterodimer of an alpha and a beta chain.

This protein is one of the two subunits of integration host factor, a specific DNA-binding protein that functions in genetic recombination as well as in transcriptional and translational control. The sequence is that of Integration host factor subunit alpha from Pectobacterium atrosepticum (strain SCRI 1043 / ATCC BAA-672) (Erwinia carotovora subsp. atroseptica).